The following is a 210-amino-acid chain: Transcription factor ALC (210 aa).

The tract at residues 1–49 (MGDSDVGDRLPPPSSSDELSSFLRQILSRTPTAQPSSPPKSTNVSSAET) is disordered. Polar residues predominate over residues 27–48 (LSRTPTAQPSSPPKSTNVSSAE). One can recognise a bHLH domain in the interval 93–142 (IDAQFHNLSEKKRRSKINEKMKALQKLIPNSNKTDKASMLDEAIEYLKQL).

Homodimer. In terms of tissue distribution, expressed constitutively in roots, leaves, stems, and flowers. Confined to the valve margins of the silique.

It is found in the nucleus. In terms of biological role, required for the dehiscence of fruit, especially for the separation of the valve cells from the replum. Promotes the differentiation of a strip of labile nonlignified cells sandwiched between layers of lignified cells. The polypeptide is Transcription factor ALC (ALC) (Arabidopsis thaliana (Mouse-ear cress)).